The chain runs to 391 residues: MEEFNTTVRISGFVLSSLMFHHLNSDADVEGLILGESVGEENCRITDSQIDHIQFEHTLNIQKHIPCHKLHSFYSNVGDVSEQKIRQILSDYKEENVIGWYRQRRNTRQQMTFMEQVIHRNMRKILSNQELVFMLLTPSQGTASGSTHRLEFSAFIWHSSQYINIPISVSNLGNLEQQDYWRVSSTCPSLGQSQAVNQHRAKFFCSGDDLREVRNVSDMNDALLAEMQKVCVEVEKSERTVEKLQEDIAQLKEAIGKQKTHPEEHETPISACPEEPKENTLLCSALRTLFPSVPSLRTQTLTVHGFPVLQLCCNTDHNIDISTKLPQILENQHSRRKVTAPRLRKKCLVASFPQRLKRKRKTREVSESASESGSDTEIEMNGQSGSNSPVF.

The 149-residue stretch at 8-156 (VRISGFVLSS…THRLEFSAFI (149 aa)) folds into the MPN domain. The stretch at 223 to 261 (LLAEMQKVCVEVEKSERTVEKLQEDIAQLKEAIGKQKTH) forms a coiled coil. A disordered region spans residues 354 to 391 (QRLKRKRKTREVSESASESGSDTEIEMNGQSGSNSPVF). The span at 367–391 (ESASESGSDTEIEMNGQSGSNSPVF) shows a compositional bias: polar residues. At serine 388 the chain carries Phosphoserine. The short motif at 388–391 (SPVF) is the pSXXF motif element.

Belongs to the FAM175 family. Abraxas subfamily. Component of the ARISC complex. Component of the BRCA1-A complex. Homodimer. Phosphorylation of Ser-388 of the pSXXF motif by ATM or ATR constitutes a specific recognition motif for the BRCT domain of BRCA1.

Its subcellular location is the nucleus. Functionally, involved in DNA damage response and double-strand break (DSB) repair. Component of the BRCA1-A complex, acting as a central scaffold protein that assembles the various components of the complex. The BRCA1-A complex specifically recognizes 'Lys-63'-linked ubiquitinated histones H2A and H2AX at DNA lesion sites. This complex also possesses deubiquitinase activity that specifically removes 'Lys-63'-linked ubiquitin on histones H2A and H2AX. The chain is BRCA1-A complex subunit Abraxas 1 from Danio rerio (Zebrafish).